Consider the following 2896-residue polypeptide: Hemocyanin G-type, units Oda to Odg (2896 aa).

The functional unit Oda stretch occupies residues 1-419 (NLIRKDVDAL…ADMVVVDKTG (419 aa)). Position 41 (His41) interacts with Cu cation. Cys47 and Cys57 are joined by a disulfide. Positions 58–60 (CLH) form a cross-link, 2'-(S-cysteinyl)-histidine (Cys-His). Cu cation is bound by residues His60, His69, His178, His182, and His209. 2 cysteine pairs are disulfide-bonded: Cys168-Cys234 and Cys321-Cys333. N-linked (GlcNAc...) asparagine glycosylation occurs at Asn386. Residues 420–834 (LNVRKDLQSL…KESGVVFDEL (415 aa)) form a functional unit Odb region. His460 provides a ligand contact to Cu cation. Cys466 and Cys477 are oxidised to a cystine. A cross-link (2'-(S-cysteinyl)-histidine (Cys-His)) is located at residues 478 to 480 (CVH). Residues His480, His489, His601, His605, and His632 each coordinate Cu cation. Cys591 and Cys657 are oxidised to a cystine. The N-linked (GlcNAc...) asparagine glycan is linked to Asn804. The tract at residues 835 to 1254 (YRSRRDVSSL…GIWVEPVTSA (420 aa)) is functional unit Odc. His875 provides a ligand contact to Cu cation. An intrachain disulfide couples Cys881 to Cys892. The 2'-(S-cysteinyl)-histidine (Cys-His) cross-link spans 893-895 (CHH). His895, His904, His1013, His1017, His1044, and His1292 together coordinate Cu cation. Residues Cys1003 and Cys1070 are joined by a disulfide bond. The tract at residues 1255–1667 (NRIRKNLNAL…ADIKSEEGNE (413 aa)) is functional unit Odd. A disulfide bridge connects residues Cys1298 and Cys1309. The 2'-(S-cysteinyl)-histidine (Cys-His) cross-link spans 1310 to 1312 (CIH). Cu cation-binding residues include His1312, His1321, His1425, His1429, and His1456. Cys1415 and Cys1482 are disulfide-bonded. The N-linked (GlcNAc...) asparagine glycan is linked to Asn1496. Cys1571 and Cys1581 are joined by a disulfide. The N-linked (GlcNAc...) asparagine glycan is linked to Asn1634. A functional unit Ode region spans residues 1668-2085 (YLVRKNVERL…NEDADIDTPL (418 aa)). His1708 is a Cu cation binding site. A disulfide bridge connects residues Cys1714 and Cys1725. The 2'-(S-cysteinyl)-histidine (Cys-His) cross-link spans 1726–1728 (CLH). Positions 1728, 1737, 1849, 1853, and 1880 each coordinate Cu cation. 2 disulfides stabilise this stretch: Cys1839–Cys1906 and Cys1997–Cys2003. A glycan (N-linked (GlcNAc...) asparagine) is linked at Asn2055. The segment at 2086-2502 (NHIRRNVESL…REVHKKTVGD (417 aa)) is functional unit Odf. His2126 is a binding site for Cu cation. Residues Cys2131 and Cys2141 are joined by a disulfide bond. A cross-link (2'-(S-cysteinyl)-histidine (Cys-His)) is located at residues 2142–2144 (CLH). Cu cation-binding residues include His2144 and His2153. The N-linked (GlcNAc...) asparagine glycan is linked to Asn2201. 2 disulfide bridges follow: Cys2252–Cys2319 and Cys2406–Cys2411. Positions 2262, 2266, and 2293 each coordinate Cu cation. Residues 2503-2896 (AIIRKNVNSL…VFLAPAKTTH (394 aa)) form a functional unit Odg region. His2543 is a binding site for Cu cation. Cys2549 and Cys2559 are joined by a disulfide. The N-linked (GlcNAc...) asparagine glycan is linked to Asn2553. Positions 2560-2562 (CQH) form a cross-link, 2'-(S-cysteinyl)-histidine (Cys-His). Positions 2562, 2571, 2671, 2675, and 2702 each coordinate Cu cation. Cystine bridges form between Cys2661–Cys2728 and Cys2815–Cys2821.

Belongs to the tyrosinase family. Hemocyanin subfamily. Decamers of large identical subunits (350 kDa), each containing 7 globular oxygen-binding functional units: ODA, ODB, ODC, ODD, ODE, ODF, and ODG. Decamer formation requires the presence of magnesium ions. The cofactor is Cu(2+).

In terms of biological role, hemocyanins are copper-containing oxygen carriers occurring freely dissolved in the hemolymph of many mollusks and arthropods. The sequence is that of Hemocyanin G-type, units Oda to Odg (ODHCY) from Enteroctopus dofleini (North Pacific giant octopus).